The chain runs to 150 residues: Troponin C, isoform 1 (150 aa).

An N-acetylmethionine modification is found at M1. 4 EF-hand domains span residues 7–42 (DQVQ…MGVK), 43–78 (ISDR…FLSE), 83–118 (ALKK…LDNK), and 119–150 (LTED…MMNG). D56, D58, S60, E62, and E67 together coordinate Ca(2+). Ca(2+) contacts are provided by D132, D134, S136, T138, and E143.

Belongs to the troponin C family.

Troponin is the central regulatory protein of striated muscle contraction. Tn consists of three components: Tn-I which is the inhibitor of actomyosin ATPase, Tn-T which contains the binding site for tropomyosin and Tn-C. The binding of calcium to Tn-C abolishes the inhibitory action of Tn on actin filaments. This Homarus americanus (American lobster) protein is Troponin C, isoform 1.